The following is a 163-amino-acid chain: Nucleotide-binding protein KPK_4305 (163 aa).

It belongs to the YajQ family.

Functionally, nucleotide-binding protein. The polypeptide is Nucleotide-binding protein KPK_4305 (Klebsiella pneumoniae (strain 342)).